A 280-amino-acid polypeptide reads, in one-letter code: Nocamycin O-methyltransferase (280 aa).

Belongs to the methyltransferase superfamily.

The catalysed reaction is nocamycin E + S-adenosyl-L-methionine = nocamycin I + S-adenosyl-L-homocysteine. Its pathway is antibiotic biosynthesis. Involved in the biosynthesis of nocamycin I and nocamycin II. Catalyzes the methylation of nocamycin E to yield nocamycin I. The chain is Nocamycin O-methyltransferase from Saccharothrix syringae (Nocardiopsis syringae).